Here is a 485-residue protein sequence, read N- to C-terminus: Adenosylhomocysteinase (485 aa).

Residues threonine 64, aspartate 139, and glutamate 205 each coordinate substrate. Position 206–208 (206–208) interacts with NAD(+); it reads TTT. 2 residues coordinate substrate: lysine 235 and aspartate 239. Residues asparagine 240, 269 to 274, glutamate 292, asparagine 327, 348 to 350, and asparagine 397 contribute to the NAD(+) site; these read GYGDVG and IGH.

This sequence belongs to the adenosylhomocysteinase family. NAD(+) serves as cofactor.

It carries out the reaction S-adenosyl-L-homocysteine + H2O = L-homocysteine + adenosine. Its pathway is amino-acid biosynthesis; L-homocysteine biosynthesis; L-homocysteine from S-adenosyl-L-homocysteine: step 1/1. In terms of biological role, adenosylhomocysteine is a competitive inhibitor of S-adenosyl-L-methionine-dependent methyl transferase reactions; therefore adenosylhomocysteinase may play a key role in the control of methylations via regulation of the intracellular concentration of adenosylhomocysteine. This is Adenosylhomocysteinase (SAHH) from Phalaenopsis sp. (Moth orchid).